A 233-amino-acid chain; its full sequence is Large ribosomal subunit protein uL1 (233 aa).

This sequence belongs to the universal ribosomal protein uL1 family. In terms of assembly, part of the 50S ribosomal subunit.

Its function is as follows. Binds directly to 23S rRNA. The L1 stalk is quite mobile in the ribosome, and is involved in E site tRNA release. In terms of biological role, protein L1 is also a translational repressor protein, it controls the translation of the L11 operon by binding to its mRNA. This Rhodospirillum rubrum (strain ATCC 11170 / ATH 1.1.1 / DSM 467 / LMG 4362 / NCIMB 8255 / S1) protein is Large ribosomal subunit protein uL1.